The following is a 378-amino-acid chain: Myoglobin (378 aa).

Blocked amino end (Ala) is present on A2. H332 is a heme binding site.

It belongs to the indoleamine 2,3-dioxygenase family. In terms of assembly, homodimer. Requires heme as cofactor.

In terms of biological role, serves a reserve supply of oxygen and facilitates the movement of oxygen within muscles. In Haliotis diversicolor (Abalone), this protein is Myoglobin.